The chain runs to 346 residues: Partitioning defective 6 homolog alpha (346 aa).

The tract at residues 1–116 is interaction with PRKCI and PRKCZ; that stretch reads MARPQRTPAR…SNSLQRRKKG (116 aa). A PB1 domain is found at 15–95; that stretch reads IVEVKSKFDA…PPLRLLVQKR (81 aa). An interaction with PARD3 and CDC42 region spans residues 126-253; it reads RTRPPLLISL…VTVKPANQRN (128 aa). Residues 133-150 enclose the Pseudo-CRIB domain; that stretch reads ISLPQDFRQVSSVIDVDL. The region spanning 157-250 is the PDZ domain; it reads RVRLHKHGSD…NLIVTVKPAN (94 aa). Disordered regions lie at residues 257 to 294 and 317 to 346; these read RGAS…HPPC and GSSL…GFSL. Position 278 is a phosphoserine (Ser278). Residues 317–332 are compositionally biased toward polar residues; sequence GSSLPSLDSREQANSG. Residue Ser345 is modified to Phosphoserine.

This sequence belongs to the PAR6 family. As to quaternary structure, interacts with PALS1 and CRB3. Interacts with PARD3. Interacts with GTP-bound forms of CDC42, RHOQ/TC10 and RAC1. Interacts with the N-terminal part of PRKCI and PRKCZ. Part of a complex with PARD3, CDC42 or RAC1 and PRKCI or PRKCZ. Part of a complex with LLGL1 and PRKCI. Interacts with MAP2K5. Interacts with TGFBR1; involved in TGF-beta induced epithelial to mesenchymal transition. Interacts with ECT2 ('Thr-359' phosphorylated form) and PRKCI. Interacts with DCTN1 and PCM1. Phosphorylated by the TGF-beta receptor. Post-translationally, ubiquitinated by the SCF(FBXO31) complex, leading to its proteasomal degradation.

The protein resides in the cytoplasm. The protein localises to the cell membrane. Its subcellular location is the cell junction. It localises to the tight junction. It is found in the cytoskeleton. The protein resides in the microtubule organizing center. The protein localises to the centrosome. Its subcellular location is the centriolar satellite. Adapter protein involved in asymmetrical cell division and cell polarization processes. Probably involved in the formation of epithelial tight junctions. Association with PARD3 may prevent the interaction of PARD3 with F11R/JAM1, thereby preventing tight junction assembly. The PARD6-PARD3 complex links GTP-bound Rho small GTPases to atypical protein kinase C proteins. Regulates centrosome organization and function. Essential for the centrosomal recruitment of key proteins that control centrosomal microtubule organization. In Rattus norvegicus (Rat), this protein is Partitioning defective 6 homolog alpha (Pard6a).